The primary structure comprises 1306 residues: Receptor-type tyrosine-protein phosphatase C (1306 aa).

The first 25 residues, 1–25 (MTMYLWLKLLAFGFAFLDTEVFVTG), serve as a signal peptide directing secretion. The Extracellular segment spans residues 26-577 (QSPTPSPTGL…LHHSTSYNSK (552 aa)). Residues 28 to 163 (PTPSPTGLTT…TASTFPTDPV (136 aa)) form a disordered region. Composition is skewed to polar residues over residues 52–61 (THTTAFSPAS) and 70–131 (SETT…SGSA). Asparagine 80, asparagine 92, asparagine 97, asparagine 186, asparagine 192, asparagine 199, asparagine 234, asparagine 262, asparagine 272, and asparagine 278 each carry an N-linked (GlcNAc...) asparagine glycan. The N-linked (GlcNAc...) asparagine; atypical glycan is linked to asparagine 286. Residues asparagine 337, asparagine 380, asparagine 421, asparagine 470, asparagine 490, and asparagine 531 are each glycosylated (N-linked (GlcNAc...) asparagine). Fibronectin type-III domains are found at residues 391 to 483 (SPGE…TKSA) and 484 to 576 (PPSQ…SYNS). The helical transmembrane segment at 578 to 598 (ALIAFLAFLIIVTSIALLVVL) threads the bilayer. Over 599 to 1306 (YKIYDLHKKR…PASPALNQGS (708 aa)) the chain is Cytoplasmic. 2 consecutive Tyrosine-protein phosphatase domains span residues 653 to 912 (FLAE…LVEY) and 944 to 1228 (LEAE…IAST). Tyrosine 683 carries the post-translational modification Phosphotyrosine. Residues aspartate 821, 853–859 (CSAGVGR), and glutamine 897 contribute to the substrate site. The active-site Phosphocysteine intermediate is cysteine 853. Phosphoserine occurs at positions 975, 994, 997, 1001, 1004, 1005, and 1009. The tract at residues 993 to 1014 (MSKESEHDSDESSDDDSDSEEP) is disordered. A compositionally biased stretch (acidic residues) spans 999–1012 (HDSDESSDDDSDSE). Cysteine 1169 functions as the Phosphocysteine intermediate in the catalytic mechanism. The interval 1261–1306 (CVNPLGAPEKLPEAKEQAEGSEPTSGTEGPEHSVNGPASPALNQGS) is disordered. Serine 1299 is subject to Phosphoserine.

This sequence belongs to the protein-tyrosine phosphatase family. Receptor class 1/6 subfamily. In terms of assembly, binds GANAB and PRKCSH. Interacts with SKAP1. Interacts with DPP4; the interaction is enhanced in an interleukin-12-dependent manner in activated lymphocytes. Interacts with CD53; this interaction stabilizes PTPRC on the membrane and is required for optimal phosphatase activity. As to quaternary structure, interacts with CLEC10A. Does not interact with CLEC10A. In terms of assembly, (Microbial infection) Interacts with human cytomegalovirus protein UL11; the interaction is required for binding of UL11 to T-cells. In terms of processing, heavily N- and O-glycosylated. In terms of tissue distribution, isoform 1: Detected in thymocytes. Isoform 2: Detected in thymocytes. Isoform 3: Detected in thymocytes. Isoform 4: Not detected in thymocytes. Isoform 5: Detected in thymocytes. Isoform 6: Not detected in thymocytes. Isoform 7: Detected in thymocytes. Isoform 8: Not detected in thymocytes.

The protein localises to the cell membrane. It localises to the membrane raft. It is found in the synapse. The catalysed reaction is O-phospho-L-tyrosyl-[protein] + H2O = L-tyrosyl-[protein] + phosphate. Its function is as follows. Protein tyrosine-protein phosphatase required for T-cell activation through the antigen receptor. Acts as a positive regulator of T-cell coactivation upon binding to DPP4. The first PTPase domain has enzymatic activity, while the second one seems to affect the substrate specificity of the first one. Upon T-cell activation, recruits and dephosphorylates SKAP1 and FYN. Dephosphorylates LYN, and thereby modulates LYN activity. Interacts with CLEC10A at antigen presenting cell-T cell contact; CLEC10A on immature dendritic cells recognizes Tn antigen-carrying PTPRC/CD45 receptor on effector T cells and modulates T cell activation threshold to limit autoreactivity. In terms of biological role, (Microbial infection) Acts as a receptor for human cytomegalovirus protein UL11 and mediates binding of UL11 to T-cells, leading to reduced induction of tyrosine phosphorylation of multiple signaling proteins upon T-cell receptor stimulation and impaired T-cell proliferation. The polypeptide is Receptor-type tyrosine-protein phosphatase C (Homo sapiens (Human)).